The sequence spans 305 residues: Ribonucleoside-diphosphate reductase small subunit (305 aa).

3 residues coordinate Fe cation: E64, E94, and H97. The active site involves Y101. Residues 150-170 traverse the membrane as a helical segment; the sequence is VLIFYLIEGVFFISSFYCIGL. The Fe cation site is built by E157, E191, and H194.

It belongs to the ribonucleoside diphosphate reductase small chain family. Heterotetramer composed of a homodimer of the large subunit (R1) and a homodimer of the small subunit (R2). Larger multisubunit protein complex are also active, composed of (R1)n(R2)n. Fe cation serves as cofactor.

Its subcellular location is the host membrane. The catalysed reaction is a 2'-deoxyribonucleoside 5'-diphosphate + [thioredoxin]-disulfide + H2O = a ribonucleoside 5'-diphosphate + [thioredoxin]-dithiol. Functionally, ribonucleoside-diphosphate reductase holoenzyme provides the precursors necessary for viral DNA synthesis. Allows virus growth in non-dividing cells, as well as reactivation from latency in infected hosts. Catalyzes the biosynthesis of deoxyribonucleotides from the corresponding ribonucleotides. This Alcelaphine herpesvirus 1 (strain C500) (AlHV-1) protein is Ribonucleoside-diphosphate reductase small subunit.